Here is a 154-residue protein sequence, read N- to C-terminus: Superoxide dismutase [Cu-Zn] (154 aa).

Cu cation is bound by residues H47, H49, and H64. C58 and C147 are disulfide-bonded. Zn(2+)-binding residues include H64, H72, H81, and D84. H121 serves as a coordination point for Cu cation. Residue R144 coordinates substrate.

It belongs to the Cu-Zn superoxide dismutase family. In terms of assembly, homodimer. Cu cation serves as cofactor. Requires Zn(2+) as cofactor.

Its subcellular location is the cytoplasm. The enzyme catalyses 2 superoxide + 2 H(+) = H2O2 + O2. Functionally, destroys radicals which are normally produced within the cells and which are toxic to biological systems. The protein is Superoxide dismutase [Cu-Zn] (SOD1) of Claviceps purpurea (strain 20.1) (Ergot fungus).